Consider the following 243-residue polypeptide: Adenylate dimethylallyltransferase (243 aa).

This sequence belongs to the isopentenyl transferase family.

It carries out the reaction dimethylallyl diphosphate + AMP = N(6)-(dimethylallyl)adenosine 5'-phosphate + diphosphate. Functionally, transfers dimethylallyl groups to AMP as part of the biosynthesis of cytokinin phytohormones. This Rhizobium rhizogenes (Agrobacterium rhizogenes) protein is Adenylate dimethylallyltransferase (tzs).